The sequence spans 203 residues: Probable cytochrome c oxidase subunit 3 (203 aa).

The next 5 membrane-spanning stretches (helical) occupy residues 30 to 50, 71 to 91, 96 to 116, 143 to 163, and 179 to 199; these read IVWLSSELMFFAGLFAFYFSA, VPVTLVLIASSFTCQMGVFAA, IFGLRRWYVITFLMGLFFVLG, ATGFHGLHVTGGLIAFIFLLV, and IVVSYYWHFVDIVWIALFTVI.

It belongs to the cytochrome c oxidase subunit 3 family.

It is found in the cell membrane. It catalyses the reaction 4 Fe(II)-[cytochrome c] + O2 + 8 H(+)(in) = 4 Fe(III)-[cytochrome c] + 2 H2O + 4 H(+)(out). This is Probable cytochrome c oxidase subunit 3 (ctaE) from Mycobacterium bovis (strain ATCC BAA-935 / AF2122/97).